The following is an 865-amino-acid chain: Carbohydrate-responsive element-binding protein (865 aa).

Disordered regions lie at residues 15–41 (PRVV…AGGL) and 53–77 (MVSS…LADF). Ser20, Ser23, and Ser25 each carry phosphoserine. Thr27 is subject to Phosphothreonine. Ser196 is subject to Phosphoserine. Disordered stretches follow at residues 334-392 (GILG…TKMP) and 500-653 (QPRC…LSRG). Polar residues predominate over residues 351-368 (GMTPLSGNTRLQARNSCS). Residues 515–533 (ASPPTLTSATASPTATATA) show a composition bias toward low complexity. The residue at position 568 (Ser568) is a Phosphoserine; by AMPK. Positions 583–597 (PPIPAPTPPRPPPGP) are enriched in pro residues. A phosphoserine mark is found at Ser615, Ser627, and Ser644. A bHLH domain is found at 662–716 (NRRITHISAEQKRRFNIKLGFDTLHGLVSTLSAQPSLKVSKATTLQKTAEYILML). Residues 716–737 (LQQERAAMQEEAQQLRDEIEEL) form a leucine-zipper region.

As to quaternary structure, binds DNA as a heterodimer with TCFL4/MLX. Phosphorylation at Ser-568 by AMPK inactivates the DNA-binding activity.

It is found in the nucleus. In terms of biological role, transcriptional repressor. Binds to the canonical and non-canonical E box sequences 5'-CACGTG-3'. The sequence is that of Carbohydrate-responsive element-binding protein (Mlxipl) from Rattus norvegicus (Rat).